A 219-amino-acid chain; its full sequence is Small ribosomal subunit protein uS3 (219 aa).

Residues 38-106 (VRKFVKTKLQ…QVAVNIVEVK (69 aa)) form the KH type-2 domain.

It belongs to the universal ribosomal protein uS3 family. In terms of assembly, part of the 30S ribosomal subunit. Forms a tight complex with proteins S10 and S14.

Binds the lower part of the 30S subunit head. Binds mRNA in the 70S ribosome, positioning it for translation. In Desulfitobacterium hafniense (strain DSM 10664 / DCB-2), this protein is Small ribosomal subunit protein uS3.